The primary structure comprises 339 residues: Ketol-acid reductoisomerase (NADP(+)) (339 aa).

One can recognise a KARI N-terminal Rossmann domain in the interval 1-182 (MRVYYDRDAD…GGGRSGIIET (182 aa)). Residues 24–27 (YGSQ), K48, S51, T53, and 83–86 (DELQ) each bind NADP(+). The active site involves H108. G134 lines the NADP(+) pocket. Positions 183–328 (NFKEECETDL…AKLRGMMPWI (146 aa)) constitute a KARI C-terminal knotted domain. 4 residues coordinate Mg(2+): D191, E195, E227, and E231. S252 is a binding site for substrate.

It belongs to the ketol-acid reductoisomerase family. Mg(2+) serves as cofactor.

The catalysed reaction is (2R)-2,3-dihydroxy-3-methylbutanoate + NADP(+) = (2S)-2-acetolactate + NADPH + H(+). It catalyses the reaction (2R,3R)-2,3-dihydroxy-3-methylpentanoate + NADP(+) = (S)-2-ethyl-2-hydroxy-3-oxobutanoate + NADPH + H(+). Its pathway is amino-acid biosynthesis; L-isoleucine biosynthesis; L-isoleucine from 2-oxobutanoate: step 2/4. The protein operates within amino-acid biosynthesis; L-valine biosynthesis; L-valine from pyruvate: step 2/4. In terms of biological role, involved in the biosynthesis of branched-chain amino acids (BCAA). Catalyzes an alkyl-migration followed by a ketol-acid reduction of (S)-2-acetolactate (S2AL) to yield (R)-2,3-dihydroxy-isovalerate. In the isomerase reaction, S2AL is rearranged via a Mg-dependent methyl migration to produce 3-hydroxy-3-methyl-2-ketobutyrate (HMKB). In the reductase reaction, this 2-ketoacid undergoes a metal-dependent reduction by NADPH to yield (R)-2,3-dihydroxy-isovalerate. The chain is Ketol-acid reductoisomerase (NADP(+)) from Sinorhizobium fredii (strain NBRC 101917 / NGR234).